A 488-amino-acid chain; its full sequence is Serine/threonine-protein kinase haspin homolog hrk1 (488 aa).

A Protein kinase domain is found at threonine 156–tyrosine 488. ATP contacts are provided by residues isoleucine 162–valine 170 and lysine 184. Aspartate 305 acts as the Proton acceptor in catalysis.

This sequence belongs to the protein kinase superfamily. Ser/Thr protein kinase family. Haspin subfamily. Interacts with pds5 and swi6.

It is found in the cytoplasm. Its subcellular location is the chromosome. It catalyses the reaction L-seryl-[protein] + ATP = O-phospho-L-seryl-[protein] + ADP + H(+). It carries out the reaction L-threonyl-[protein] + ATP = O-phospho-L-threonyl-[protein] + ADP + H(+). In terms of biological role, serine/threonine haspin-like protein kinase involved in cell cycle regulation. Acts in chromosomal passenger complex (CPC) targeting to centromeres by phosphorylating histone H3 at 'Thr3' (H3T3ph). The protein is Serine/threonine-protein kinase haspin homolog hrk1 (hrk1) of Schizosaccharomyces pombe (strain 972 / ATCC 24843) (Fission yeast).